We begin with the raw amino-acid sequence, 534 residues long: GPI transamidase component GPI17 (534 aa).

At 1 to 8 the chain is on the cytoplasmic side; sequence MSNANLRK. A helical membrane pass occupies residues 9–29; the sequence is WVGFCFVAIYLFLGVPLWYKL. Residues 30-472 are Lumenal-facing; the sequence is TTVYRASLPI…VQQNFFPQEH (443 aa). 5 N-linked (GlcNAc...) asparagine glycosylation sites follow: Asn100, Asn170, Asn228, Asn247, and Asn299. The helical transmembrane segment at 473 to 493 threads the bilayer; it reads MIAVYLPLLGPISAVMFFGFY. Over 494 to 534 the chain is Cytoplasmic; sequence NVMKEKNQKSKKNGTEREVAKEKLELKEAQKLHAIDGEDEL.

It belongs to the PIGS family. As to quaternary structure, forms a complex with CDC91, GPI16, GPI8 and GAA1. N-glycosylated.

Its subcellular location is the endoplasmic reticulum membrane. It functions in the pathway glycolipid biosynthesis; glycosylphosphatidylinositol-anchor biosynthesis. Its function is as follows. Component of the GPI transamidase complex. Involved in transfer of GPI to proteins. This Saccharomyces cerevisiae (strain ATCC 204508 / S288c) (Baker's yeast) protein is GPI transamidase component GPI17 (GPI17).